A 467-amino-acid chain; its full sequence is Bifunctional enzyme LpxC/FabZ (467 aa).

The interval 1 to 306 is UDP-3-O-acyl-N-acetylglucosamine deacetylase; that stretch reads MLIHQRTLQN…FVKQLKKYAD (306 aa). Positions 79, 264, and 268 each coordinate Zn(2+). Residue His291 is the Proton donor of the active site. Residues 307–467 are 3-hydroxyacyl-[acyl-carrier-protein] dehydratase; the sequence is RNKLARQYQH…LMATVMEKKN (161 aa). The active site involves His370.

It in the N-terminal section; belongs to the LpxC family. In the C-terminal section; belongs to the thioester dehydratase family. Zn(2+) serves as cofactor.

The protein resides in the cytoplasm. The enzyme catalyses a UDP-3-O-[(3R)-3-hydroxyacyl]-N-acetyl-alpha-D-glucosamine + H2O = a UDP-3-O-[(3R)-3-hydroxyacyl]-alpha-D-glucosamine + acetate. It catalyses the reaction a (3R)-hydroxyacyl-[ACP] = a (2E)-enoyl-[ACP] + H2O. Its pathway is glycolipid biosynthesis; lipid IV(A) biosynthesis; lipid IV(A) from (3R)-3-hydroxytetradecanoyl-[acyl-carrier-protein] and UDP-N-acetyl-alpha-D-glucosamine: step 2/6. Catalyzes the hydrolysis of UDP-3-O-myristoyl-N-acetylglucosamine to form UDP-3-O-myristoylglucosamine and acetate, the committed step in lipid A biosynthesis. In terms of biological role, involved in unsaturated fatty acids biosynthesis. Catalyzes the dehydration of short chain beta-hydroxyacyl-ACPs and long chain saturated and unsaturated beta-hydroxyacyl-ACPs. The sequence is that of Bifunctional enzyme LpxC/FabZ (lpxC/fabZ) from Chlorobaculum tepidum (strain ATCC 49652 / DSM 12025 / NBRC 103806 / TLS) (Chlorobium tepidum).